We begin with the raw amino-acid sequence, 789 residues long: Protein FLOWERING LOCUS D (789 aa).

The segment at 1–23 is disordered; the sequence is MVSFSAPKKRRRGRSQRSMSSLN. Residues 76 to 177 enclose the SWIRM domain; that stretch reads NKEATTEALL…FGIAQAIKDK (102 aa). Residues S195, E214, R216, R222, and 240–243 contribute to the FAD site; that span reads GGSV. K287 is covalently cross-linked (Glycyl lysine isopeptide (Lys-Gly) (interchain with G-Cter in SUMO)). FAD contacts are provided by residues E595, 604-605, and 607-612; these read TM and GAFVTG. Residues K693 and K770 each participate in a glycyl lysine isopeptide (Lys-Gly) (interchain with G-Cter in SUMO) cross-link.

Belongs to the flavin monoamine oxidase family. In terms of assembly, interacts with HDA6. It depends on FAD as a cofactor. Sumoylated at Lys-287, Lys-693 and Lys-770 by SIZ1. Sumoylation alters its activity and the histone H4 acetylation status of FLC locus, promoting FLC expression.

In terms of biological role, probable histone demethylase that promotes flowering independently of the photoperiod and vernalization pathways by repressing FLOWERING LOCUS C (FLC), a floral repressor that blocks the transition from vegetative to reproductive development. Probably mediates histone H3 'Lys-4' demethylation at FLC locus. Seems to act in partial redundancy with LDL1 and LDL2 to repress FLC expression. Required for histone H4 deacetylation of FLC locus. May be a component of the histone deacetylase complex. Forms a histone deacetylase complex with HDA5, HDA6 and MSI4/FVE that represses FLC gene expression to control flowering time. Required for systemic acquired resistance (SAR) toward pathogenic bacteria (e.g. Pseudomonas syringae pv tomato DC3000 (avrPto)). Together with FLD and MSI4/FVE, contributes to dehydroabietinal-dependent (DA, a diterpenoid tricyclic diterpene) activation of flowering ans SAR. The protein is Protein FLOWERING LOCUS D of Arabidopsis thaliana (Mouse-ear cress).